The sequence spans 387 residues: Phosphoglycerate kinase (387 aa).

Substrate contacts are provided by residues 21–23 (DLN), arginine 36, 59–62 (HLGR), arginine 113, and arginine 146. Residues lysine 197, glutamate 314, and 340 to 343 (GGDT) each bind ATP.

The protein belongs to the phosphoglycerate kinase family. As to quaternary structure, monomer.

The protein localises to the cytoplasm. The catalysed reaction is (2R)-3-phosphoglycerate + ATP = (2R)-3-phospho-glyceroyl phosphate + ADP. It functions in the pathway carbohydrate degradation; glycolysis; pyruvate from D-glyceraldehyde 3-phosphate: step 2/5. The polypeptide is Phosphoglycerate kinase (Tolumonas auensis (strain DSM 9187 / NBRC 110442 / TA 4)).